A 634-amino-acid polypeptide reads, in one-letter code: RING finger protein 207 (634 aa).

The RING-type zinc-finger motif lies at 25–64 (CPLCHVQYERPCLLDCFHDFCAGCLRGRATDGRLTCPLCQ). The B box-type; atypical zinc-finger motif lies at 93 to 145 (VEAVRCANCDLECSEQDVETTYFCNTCGQPLCARCRDETHRARMFARHDIVAL). The Zn(2+) site is built by C98, C101, C127, and H132. 2 coiled-coil regions span residues 422–457 (EHCRHYEDSYRHLQAEMQSLKDQVQELHRDLTKHHS) and 494–518 (EIWEEAYQRVANEQEIYEAQLHDLL). The disordered stretch occupies residues 552–634 (FQAPVDEQSE…DVPTWREHPT (83 aa)).

In terms of assembly, interacts with the core-glycosylated, but not the fully glycosylated form of KCNH2/HERG. Interacts with DNAJA1 and HSPA8. Interacts (via the C-terminus) with HSPA1A; this interaction additively increases KCNH2 expression.

It localises to the cytoplasm. Functionally, plays a role in cardiac repolarization possibly by stabilizing membrane expression of the potassium channel KCNH2/HERG, or by assisting its synthesis, folding or export from the endoplasmic reticulum, in a heat shock protein-dependent manner. The protein is RING finger protein 207 (RNF207) of Homo sapiens (Human).